Reading from the N-terminus, the 185-residue chain is uncharacterized protein (185 aa).

This is an uncharacterized protein from Methanocaldococcus jannaschii (strain ATCC 43067 / DSM 2661 / JAL-1 / JCM 10045 / NBRC 100440) (Methanococcus jannaschii).